The chain runs to 103 residues: ATP-dependent Clp protease adapter protein ClpS (103 aa).

It belongs to the ClpS family. As to quaternary structure, binds to the N-terminal domain of the chaperone ClpA.

In terms of biological role, involved in the modulation of the specificity of the ClpAP-mediated ATP-dependent protein degradation. The chain is ATP-dependent Clp protease adapter protein ClpS from Neisseria meningitidis serogroup A / serotype 4A (strain DSM 15465 / Z2491).